We begin with the raw amino-acid sequence, 282 residues long: HTH-type transcriptional activator RhaR (282 aa).

An HTH araC/xylS-type domain is found at 179 to 277 (DKLITALANS…GMTPSQWRHL (99 aa)). 2 DNA-binding regions (H-T-H motif) span residues 196–217 (DAFCQQEQCSERVLRQQFRAQT) and 244–267 (ISEISMQCGFEDSNYFSVVFTRET).

As to quaternary structure, binds DNA as a dimer.

The protein resides in the cytoplasm. Its function is as follows. Activates expression of the rhaSR operon in response to L-rhamnose. The sequence is that of HTH-type transcriptional activator RhaR from Salmonella dublin (strain CT_02021853).